The following is a 238-amino-acid chain: Urease subunit alpha (238 aa).

Residues 1–102 form a urease gamma region; sequence MKLTPKELDK…LVTVHTPIEA (102 aa). Residues 103 to 238 form a urease beta region; the sequence is NGKLVPGELF…DDNYVKTIKE (136 aa).

In the N-terminal section; belongs to the urease gamma subunit family. The protein in the C-terminal section; belongs to the urease beta subunit family. As to quaternary structure, heterohexamer of 3 UreA (alpha) and 3 UreB (beta) subunits.

It localises to the cytoplasm. It catalyses the reaction urea + 2 H2O + H(+) = hydrogencarbonate + 2 NH4(+). Its pathway is nitrogen metabolism; urea degradation; CO(2) and NH(3) from urea (urease route): step 1/1. In Helicobacter pylori (strain P12), this protein is Urease subunit alpha.